Here is a 185-residue protein sequence, read N- to C-terminus: Ribosome-recycling factor (185 aa).

Belongs to the RRF family.

Its subcellular location is the cytoplasm. In terms of biological role, responsible for the release of ribosomes from messenger RNA at the termination of protein biosynthesis. May increase the efficiency of translation by recycling ribosomes from one round of translation to another. This chain is Ribosome-recycling factor, found in Photobacterium profundum (strain SS9).